Reading from the N-terminus, the 207-residue chain is Phosphatidylinositol phosphate synthase (207 aa).

2 helical membrane-spanning segments follow: residues 21–44 (LRAHVTPDVVTWIGTIGAVLMALI) and 50–67 (WLWQGPWLVTLFIFSDSL). Position 28 to 31 (28 to 31 (DVVT)) interacts with a CDP-1,2-diacyl-sn-glycerol. Mg(2+) is bound by residues D65 and D68. G69, R73, and S79 together coordinate a CDP-1,2-diacyl-sn-glycerol. Residues D86 and D90 each coordinate Mg(2+). 4 helical membrane-spanning segments follow: residues 88-106 (TLDRFGDAAIFTGVALYFA), 112-131 (VLWTAMACAALVFGMATSYV), 152-170 (RLLVSLVAIEITGLARVGA), and 176-195 (VVALPIALCYLTLAGAITVV). Residue D90 is the Proton acceptor of the active site.

This sequence belongs to the CDP-alcohol phosphatidyltransferase class-I family. In terms of assembly, homodimer. Requires Mg(2+) as cofactor.

It localises to the cell membrane. It carries out the reaction a CDP-1,2-diacyl-sn-glycerol + 1D-myo-inositol 3-phosphate = a 1,2-diacyl-sn-glycero-3-phospho-(1D-myo-inositol-3-phosphate) + CMP + H(+). It catalyses the reaction 1,2-di-(9Z-octadecenoyl)-sn-glycero-3-cytidine-5'-diphosphate + 1D-myo-inositol 3-phosphate = 1,2-di-(9Z-octadecenoyl)-sn-glycero-3-phospho-(1D-myo-inositol-3-phosphate) + CMP + H(+). Its pathway is phospholipid metabolism; phosphatidylinositol phosphate biosynthesis. Its function is as follows. Catalyzes the conjugation of the 1'-hydroxyl group of D-myo-inositol-3-phosphate (also named L-myo-inositol-1-phosphate) with a lipid tail of cytidine diphosphate diacylglycerol (CDP-DAG), forming phosphatidylinositol phosphate (PIP) and CMP. PIP is a precursor of phosphatidylinositol (PI) which is an essential lipid required for cell wall formation. The protein is Phosphatidylinositol phosphate synthase of Cutibacterium acnes (strain DSM 16379 / KPA171202) (Propionibacterium acnes).